Reading from the N-terminus, the 54-residue chain is ATP synthase F(0) complex subunit 8 (54 aa).

The helical transmembrane segment at 4-24 (LNPGPWFAILVFSWLIFLTII) threads the bilayer. The interval 35–54 (NEPTPVSAEKHKTESWDWPW) is disordered. Residues 42–54 (AEKHKTESWDWPW) are compositionally biased toward basic and acidic residues.

Belongs to the ATPase protein 8 family. Component of the ATP synthase complex composed at least of ATP5F1A/subunit alpha, ATP5F1B/subunit beta, ATP5MC1/subunit c (homooctomer), MT-ATP6/subunit a, MT-ATP8/subunit 8, ATP5ME/subunit e, ATP5MF/subunit f, ATP5MG/subunit g, ATP5MK/subunit k, ATP5MJ/subunit j, ATP5F1C/subunit gamma, ATP5F1D/subunit delta, ATP5F1E/subunit epsilon, ATP5PF/subunit F6, ATP5PB/subunit b, ATP5PD/subunit d, ATP5PO/subunit OSCP. ATP synthase complex consists of a soluble F(1) head domain (subunits alpha(3) and beta(3)) - the catalytic core - and a membrane F(0) domain - the membrane proton channel (subunits c, a, 8, e, f, g, k and j). These two domains are linked by a central stalk (subunits gamma, delta, and epsilon) rotating inside the F1 region and a stationary peripheral stalk (subunits F6, b, d, and OSCP).

It is found in the mitochondrion membrane. Its function is as follows. Subunit 8, of the mitochondrial membrane ATP synthase complex (F(1)F(0) ATP synthase or Complex V) that produces ATP from ADP in the presence of a proton gradient across the membrane which is generated by electron transport complexes of the respiratory chain. ATP synthase complex consist of a soluble F(1) head domain - the catalytic core - and a membrane F(1) domain - the membrane proton channel. These two domains are linked by a central stalk rotating inside the F(1) region and a stationary peripheral stalk. During catalysis, ATP synthesis in the catalytic domain of F(1) is coupled via a rotary mechanism of the central stalk subunits to proton translocation. In vivo, can only synthesize ATP although its ATP hydrolase activity can be activated artificially in vitro. Part of the complex F(0) domain. This is ATP synthase F(0) complex subunit 8 from Cyprinus carpio (Common carp).